The following is a 243-amino-acid chain: MKSLLLMMTFFTRIPVTYPYDYDEKDFIKGVKFLPVIGLLIGILMYLPTLLAPYIHRPIIIVSIWALYFLITGGLHIDGLADTFDGIFSYRSKEEMLRIMKDSRIGAFGVLGILWLLILNLTLAYYTENMLLLLVPVVGRASAVFAASRTIYARSEGMGGAFIESCRTKEGVISIAFSLLLGSMVSIKGAIIPMGITFLGVAMLTKKISKILGGMTGDTIGATIEISQTLFMLSAYLLKSIII.

6 helical membrane passes run 33-53 (FLPV…LLAP), 59-79 (IIIV…HIDG), 105-125 (IGAF…TLAY), 127-147 (TENM…VFAA), 172-192 (VISI…GAII), and 223-243 (TIEI…SIII).

It belongs to the CobS family. Mg(2+) is required as a cofactor.

The protein localises to the cell membrane. The enzyme catalyses alpha-ribazole + adenosylcob(III)inamide-GDP = adenosylcob(III)alamin + GMP + H(+). It carries out the reaction alpha-ribazole 5'-phosphate + adenosylcob(III)inamide-GDP = adenosylcob(III)alamin 5'-phosphate + GMP + H(+). It functions in the pathway cofactor biosynthesis; adenosylcobalamin biosynthesis; adenosylcobalamin from cob(II)yrinate a,c-diamide: step 7/7. In terms of biological role, joins adenosylcobinamide-GDP and alpha-ribazole to generate adenosylcobalamin (Ado-cobalamin). Also synthesizes adenosylcobalamin 5'-phosphate from adenosylcobinamide-GDP and alpha-ribazole 5'-phosphate. The protein is Adenosylcobinamide-GDP ribazoletransferase of Alkaliphilus oremlandii (strain OhILAs) (Clostridium oremlandii (strain OhILAs)).